A 1321-amino-acid chain; its full sequence is C-Jun-amino-terminal kinase-interacting protein 4 (1321 aa).

M1 bears the N-acetylmethionine mark. The RH1 domain occupies V7–L95. Residues A66–M166 are a coiled coil. 5 positions are modified to phosphoserine: S109, S183, S185, S194, and S203. A disordered region spans residues S203 to S308. T217 is modified (phosphothreonine). The segment covering E236–V248 has biased composition (polar residues). S238, S251, S265, S268, and S272 each carry phosphoserine. A compositionally biased stretch (polar residues) spans D266–V285. T292 is modified (phosphothreonine). Phosphoserine occurs at positions 311, 329, 332, and 347. The span at A322–S332 shows a compositional bias: polar residues. Positions A322–V341 are disordered. Phosphothreonine occurs at positions 348, 365, and 418. Residues R408–M534 are a coiled coil. Over residues L473–D489 the composition is skewed to basic and acidic residues. 2 disordered regions span residues L473–R500 and S563–P600. An RH2 domain is found at R500–S604. Residue T586 is modified to Phosphothreonine. S588 is subject to Phosphoserine. Position 595 is a phosphothreonine (T595). A phosphoserine mark is found at S705, S728, S730, S732, and S733. Positions S724–V758 form a coiled coil. The segment at T853–E883 is disordered. The span at A855 to A864 shows a compositional bias: polar residues. The span at M874–E883 shows a compositional bias: acidic residues. S1188 carries the phosphoserine modification. A disordered region spans residues P1239–K1267. Residues S1255–L1266 are compositionally biased toward polar residues. T1264 is subject to Phosphothreonine.

Belongs to the JIP scaffold family. As to quaternary structure, homodimer. The homodimer interacts with ARF6, forming a heterotetramer. Homooligomer. Interacts with MAX, MAPK8, MAPK14, MAP3K3, MYC, and MAP2K4. Interacts with KNS2. Interaction with KNS2 is important in the formation of ternary complex with MAPK8. Interacts with PIP4P1. Interacts with PIKFYVE. Phosphorylated by MAPK8 and MAPK14. In terms of tissue distribution, highly expressed in brain, kidney, liver, heart.

Its subcellular location is the cytoplasm. It localises to the perinuclear region. It is found in the lysosome membrane. Its function is as follows. The JNK-interacting protein (JIP) group of scaffold proteins selectively mediates JNK signaling by aggregating specific components of the MAPK cascade to form a functional JNK signaling module. Regulates lysosomal positioning by acting as an adapter protein which links PIP4P1-positive lysosomes to the dynein-dynactin complex. Assists PIKFYVE selective functionality in microtubule-based endosome-to-TGN trafficking. This is C-Jun-amino-terminal kinase-interacting protein 4 from Mus musculus (Mouse).